The primary structure comprises 201 residues: Ribonuclease HII (201 aa).

The region spanning Asp-12–Gln-201 is the RNase H type-2 domain. Residues Asp-18, Glu-19, and Asp-110 each coordinate a divalent metal cation.

It belongs to the RNase HII family. The cofactor is Mn(2+). Mg(2+) serves as cofactor.

The protein localises to the cytoplasm. It carries out the reaction Endonucleolytic cleavage to 5'-phosphomonoester.. In terms of biological role, endonuclease that specifically degrades the RNA of RNA-DNA hybrids. This Pseudomonas aeruginosa (strain UCBPP-PA14) protein is Ribonuclease HII.